Here is a 299-residue protein sequence, read N- to C-terminus: 11-beta-hydroxysteroid dehydrogenase-like 4A (299 aa).

A helical; Signal-anchor for type II membrane protein transmembrane segment spans residues 10 to 30 (ILLPIVTVSFLLVFMPFSIFF). NADP(+) is bound by residues 54–80 (GSSSGIGEHLAYEYARRGAYLTLVARR) and Asp-105. A substrate-binding site is contributed by Ser-184. Tyr-197 functions as the Proton acceptor in the catalytic mechanism. NADP(+) is bound by residues 197-201 (YAASK) and Lys-201.

The protein belongs to the short-chain dehydrogenases/reductases (SDR) family.

The protein resides in the membrane. The protein is 11-beta-hydroxysteroid dehydrogenase-like 4A (HSD4) of Arabidopsis thaliana (Mouse-ear cress).